The primary structure comprises 66 residues: Large ribosomal subunit protein bL31 (66 aa).

The Zn(2+) site is built by Cys16, Cys18, Cys36, and Cys39.

It belongs to the bacterial ribosomal protein bL31 family. Type A subfamily. Part of the 50S ribosomal subunit. Zn(2+) serves as cofactor.

Its function is as follows. Binds the 23S rRNA. In Nautilia profundicola (strain ATCC BAA-1463 / DSM 18972 / AmH), this protein is Large ribosomal subunit protein bL31.